A 793-amino-acid chain; its full sequence is Cation channel sperm-associated auxiliary subunit delta (793 aa).

A signal peptide spans 1-20 (MLMLMLVAAVTMWLRPLVTA). Topologically, residues 21–725 (QPLCRARTVR…AFPVQLVSAG (705 aa)) are extracellular. Cystine bridges form between Cys-24–Cys-370, Cys-60–Cys-146, Cys-145–Cys-153, Cys-388–Cys-497, Cys-511–Cys-703, Cys-526–Cys-573, and Cys-625–Cys-653. Asn-128 carries N-linked (GlcNAc...) asparagine glycosylation. 5 N-linked (GlcNAc...) asparagine glycosylation sites follow: Asn-231, Asn-241, Asn-473, Asn-539, and Asn-631. Residues 726–747 (VVMVLLISSILGSVWLAYMIPR) form a helical membrane-spanning segment. The Cytoplasmic portion of the chain corresponds to 748 to 793 (LLRTARGRRMTSFVAQLYGRCKTVCQFRASATARTGSKPMGRHRSS).

This sequence belongs to the CATSPERD family. As to quaternary structure, component of the CatSper complex or CatSpermasome composed of the core pore-forming members CATSPER1, CATSPER2, CATSPER3 and CATSPER4 as well as auxiliary members CATSPERB, CATSPERG, CATSPERD, CATSPERE, CATSPERZ, C2CD6/CATSPERT, TMEM249, TMEM262 and EFCAB9. HSPA1 may be an additional auxiliary complex member. The core complex members CATSPER1, CATSPER2, CATSPER3 and CATSPER4 form a heterotetrameric channel. The auxiliary CATSPERB, CATSPERG, CATSPERD and CATSPERE subunits form a pavilion-like structure over the pore which stabilizes the complex through interactions with CATSPER4, CATSPER3, CATSPER1 and CATSPER2 respectively. TMEM262/CATSPERH interacts with CATSPERB, further stabilizing the complex. C2CD6/CATSPERT interacts at least with CATSPERD and is required for targeting the CatSper complex in the flagellar membrane.

The protein resides in the cell projection. The protein localises to the cilium. It localises to the flagellum membrane. In terms of biological role, auxiliary component of the CatSper complex, a complex involved in sperm cell hyperactivation. Sperm cell hyperactivation is needed for sperm motility which is essential late in the preparation of sperm for fertilization. Required for CATSPER1 stability before intraflagellar transport and/or incorporation of the CatSper complex channel into the flagellar membrane. In Macaca fascicularis (Crab-eating macaque), this protein is Cation channel sperm-associated auxiliary subunit delta.